Reading from the N-terminus, the 335-residue chain is (+)-caryolan-1-ol synthase (335 aa).

Mg(2+) contacts are provided by Asp83, Asp87, Asn220, Ser224, and Glu228. Positions 83–87 (DDEFD) match the DDXXD motif motif. Residues 220 to 228 (NDICSFEKE) carry the NSE/DTE motif motif.

This sequence belongs to the terpene synthase family. Mg(2+) serves as cofactor. Mn(2+) is required as a cofactor.

The enzyme catalyses (2E,6E)-farnesyl diphosphate = (+)-(E)-beta-caryophyllene + diphosphate. It catalyses the reaction (+)-(E)-beta-caryophyllene + H2O = (+)-caryolan-1-ol. It participates in secondary metabolite biosynthesis; terpenoid biosynthesis. In terms of biological role, sesquiterpene cyclase that first catalyzes the cyclization of farnesyl diphosphate (FPP) to the bicyclic sesquiterpene (+)-beta-caryophyllene intermediate, and then its conversion to (+)-caryolan-1-ol via a second cyclization and the addition of a water molecule. The protein is (+)-caryolan-1-ol synthase (gcoA) of Streptomyces griseus subsp. griseus (strain JCM 4626 / CBS 651.72 / NBRC 13350 / KCC S-0626 / ISP 5235).